Reading from the N-terminus, the 104-residue chain is Large ribosomal subunit protein uL23 (104 aa).

The protein belongs to the universal ribosomal protein uL23 family. In terms of assembly, part of the 50S ribosomal subunit. Contacts protein L29, and trigger factor when it is bound to the ribosome.

Its function is as follows. One of the early assembly proteins it binds 23S rRNA. One of the proteins that surrounds the polypeptide exit tunnel on the outside of the ribosome. Forms the main docking site for trigger factor binding to the ribosome. The protein is Large ribosomal subunit protein uL23 of Ralstonia pickettii (strain 12J).